The following is a 257-amino-acid chain: Phosphatidylglycerol--prolipoprotein diacylglyceryl transferase (257 aa).

The next 4 helical transmembrane spans lie at 12–32 (FSIR…VYLA), 49–69 (FILM…VIFE), 83–103 (IWNG…LLVI), and 109–129 (LINP…AQAI). A 1,2-diacyl-sn-glycero-3-phospho-(1'-sn-glycerol) is bound at residue R131. 3 consecutive transmembrane segments (helical) span residues 167 to 187 (VPTF…IMSI), 197 to 217 (GEVA…IEGM), and 226 to 246 (GLRV…VMII).

It belongs to the Lgt family.

It is found in the cell membrane. It carries out the reaction L-cysteinyl-[prolipoprotein] + a 1,2-diacyl-sn-glycero-3-phospho-(1'-sn-glycerol) = an S-1,2-diacyl-sn-glyceryl-L-cysteinyl-[prolipoprotein] + sn-glycerol 1-phosphate + H(+). It functions in the pathway protein modification; lipoprotein biosynthesis (diacylglyceryl transfer). Functionally, catalyzes the transfer of the diacylglyceryl group from phosphatidylglycerol to the sulfhydryl group of the N-terminal cysteine of a prolipoprotein, the first step in the formation of mature lipoproteins. The sequence is that of Phosphatidylglycerol--prolipoprotein diacylglyceryl transferase from Streptococcus agalactiae serotype Ia (strain ATCC 27591 / A909 / CDC SS700).